A 271-amino-acid chain; its full sequence is Transcription factor PU.1 (271 aa).

Positions Leu-124–Glu-164 are disordered. Phosphoserine is present on residues Ser-141 and Ser-147. Residues Leu-154–Glu-164 are compositionally biased toward low complexity. Positions Ile-171 to Ser-254 form a DNA-binding region, ETS. 4 residues coordinate DNA: Lys-218, Arg-231, Arg-234, and Lys-244.

This sequence belongs to the ETS family. As to quaternary structure, binds DNA as a monomer. Can form homomers. Directly interacts with CEBPD/NF-IL6-beta; this interaction does not affect DNA-binding properties of each partner. Interacts with NONO/p54(nrb). Interacts with RUNX1/AML1. Interacts with GFI1; the interaction represses SPI1 transcriptional activity, hence blocks SPI1-induced macrophage differentiation of myeloid progenitor cells. Interacts with CEBPE. Interacts with IRF4/Pip and IRF8. Interacts with JUN. Interacts with RB1. Interacts with TBP.

The protein localises to the nucleus. With respect to regulation, transcriptional activity at macrophage-specific genes is inhibited by interaction with GFI1, which results in the inhibition of SPI1-induced macrophage differentiation of myeloid progenitor cells, but not that of the granulocyte lineage. Its function is as follows. Pioneer transcription factor, which controls hematopoietic cell fate by decompacting stem cell heterochromatin and allowing other transcription factors to enter otherwise inaccessible genomic sites. Once in open chromatin, can directly control gene expression by binding genetic regulatory elements and can also more broadly influence transcription by recruiting transcription factors, such as interferon regulatory factors (IRFs), to otherwise inaccessible genomic regions. Transcriptionally activates genes important for myeloid and lymphoid lineages, such as CSF1R or FCER1A. Transcriptional activation from certain promoters, possibly containing low affinity binding sites, is achieved cooperatively with other transcription factors. FCER1A transactivation is achieved in cooperation with GATA1. May be particularly important for the pro- to pre-B cell transition. Binds (via the ETS domain) onto the purine-rich DNA core sequence 5'-GAGGAA-3', also known as the PU-box. In vitro can bind RNA and interfere with pre-mRNA splicing. This is Transcription factor PU.1 (Spi1) from Rattus norvegicus (Rat).